The following is a 360-amino-acid chain: Amine dehydrogenase (360 aa).

It belongs to the amine dehydrogenase family. Homodimer.

It catalyses the reaction a secondary alkyl amine + NAD(+) + H2O = a ketone + NH4(+) + NADH + H(+). The catalysed reaction is a secondary alkyl amine + NADP(+) + H2O = a ketone + NH4(+) + NADPH + H(+). It carries out the reaction serinol + NAD(+) + H2O = dihydroxyacetone + NH4(+) + NADH + H(+). The enzyme catalyses serinol + NADP(+) + H2O = dihydroxyacetone + NH4(+) + NADPH + H(+). It catalyses the reaction 2-aminopropan-1-ol + NAD(+) + H2O = hydroxyacetone + NH4(+) + NADH + H(+). The catalysed reaction is (R)-1-phenylethylamine + NAD(+) + H2O = acetophenone + NH4(+) + NADH + H(+). It carries out the reaction (S)-1-phenylethylamine + NAD(+) + H2O = acetophenone + NH4(+) + NADH + H(+). The enzyme catalyses (2S)-2-aminobutan-1-ol + NAD(+) + H2O = 1-hydroxy-2-butanone + NH4(+) + NADH + H(+). It catalyses the reaction (2S)-2-amino-3-methylbutan-1-ol + NAD(+) + H2O = 1-hydroxy-3-methylbutan-2-one + NH4(+) + NADH + H(+). The catalysed reaction is 2-aminopentan-1-ol + NAD(+) + H2O = 1-hydroxypentan-2-one + NH4(+) + NADH + H(+). It carries out the reaction (S)-leucinol + NAD(+) + H2O = 1-hydroxy-4-methylpentan-2-one + NH4(+) + NADH + H(+). The enzyme catalyses (S)-isoleucinol + NAD(+) + H2O = (3S)-1-hydroxy-3-methylpentan-2-one + NH4(+) + NADH + H(+). It catalyses the reaction (S)-methioninol + NAD(+) + H2O = 1-hydroxy-4-(methythio)butan-2-one + NH4(+) + NADH + H(+). The catalysed reaction is 2-aminocyclohexanol + NAD(+) + H2O = 2-hydroxycyclohexan-1-one + NH4(+) + NADH + H(+). It carries out the reaction L-alanine + NAD(+) + H2O = pyruvate + NH4(+) + NADH + H(+). The enzyme catalyses D-alanine + NAD(+) + H2O = pyruvate + NH4(+) + NADH + H(+). It catalyses the reaction L-aspartate + NAD(+) + H2O = oxaloacetate + NH4(+) + NADH + H(+). The catalysed reaction is D-aspartate + NAD(+) + H2O = oxaloacetate + NH4(+) + NADH + H(+). It carries out the reaction L-glutamate + NAD(+) + H2O = 2-oxoglutarate + NH4(+) + NADH + H(+). The enzyme catalyses D-glutamate + NAD(+) + H2O = 2-oxoglutarate + NH4(+) + NADH + H(+). It catalyses the reaction L-serine + NAD(+) + H2O = 3-hydroxypyruvate + NH4(+) + NADH + H(+). The catalysed reaction is D-serine + NAD(+) + H2O = 3-hydroxypyruvate + NH4(+) + NADH + H(+). It carries out the reaction methylamine + NAD(+) + H2O = formaldehyde + NH4(+) + NADH + H(+). The enzyme catalyses ethylamine + NAD(+) + H2O = acetaldehyde + NH4(+) + NADH + H(+). It catalyses the reaction propylamine + NAD(+) + H2O = propanal + NH4(+) + NADH + H(+). The catalysed reaction is butylamine + NAD(+) + H2O = butanal + NH4(+) + NADH + H(+). It carries out the reaction hexylamine + NAD(+) + H2O = hexanal + NH4(+) + NADH + H(+). The enzyme catalyses octylamine + NAD(+) + H2O = octanal + NH4(+) + NADH + H(+). It catalyses the reaction (R)-sec-butylamine + NAD(+) + H2O = butan-2-one + NH4(+) + NADH + H(+). The catalysed reaction is (S)-sec-butylamine + NAD(+) + H2O = butan-2-one + NH4(+) + NADH + H(+). It carries out the reaction 2-aminopentane + NAD(+) + H2O = pentan-2-one + NH4(+) + NADH + H(+). The enzyme catalyses 3-aminopentane + NAD(+) + H2O = pentan-3-one + NH4(+) + NADH + H(+). It catalyses the reaction (2R)-heptan-2-amine + NAD(+) + H2O = heptan-2-one + NH4(+) + NADH + H(+). The catalysed reaction is (2S)-heptan-2-amine + NAD(+) + H2O = heptan-2-one + NH4(+) + NADH + H(+). It carries out the reaction benzylamine + NAD(+) + H2O = benzaldehyde + NH4(+) + NADH + H(+). The enzyme catalyses 3-aminobutan-2-ol + NAD(+) + H2O = acetoin + NH4(+) + NADH + H(+). It catalyses the reaction 3-aminobutan-1-ol + NAD(+) + H2O = 4-hydroxybutan-2-one + NH4(+) + NADH + H(+). The catalysed reaction is 5-hydroxypentan-2-amine + NAD(+) + H2O = 5-hydroxypentan-2-one + NH4(+) + NADH + H(+). It carries out the reaction 4-hydroxyhexan-3-amine + NAD(+) + H2O = 4-hydroxyhexan-3-one + NH4(+) + NADH + H(+). The enzyme catalyses 5-hydroxyoctan-4-amine + NAD(+) + H2O = 5-hydroxyoctan-4-one + NH4(+) + NADH + H(+). It catalyses the reaction 2-hydroxy-1-phenylethan-1-amine + NAD(+) + H2O = 2-hydroxyacetophenone + NH4(+) + NADH + H(+). The catalysed reaction is hexan-2-amine + NAD(+) + H2O = hexan-2-one + NH4(+) + NADH + H(+). It carries out the reaction 4-phenylbutan-2-amine + NAD(+) + H2O = 4-phenylbutan-2-one + NH4(+) + NADH + H(+). Functionally, catalyzes the reversible oxidative deaminations of a broad range of amines, amino alcohols and amino acids. Catalyzes the reversible dehydrogenation of serinol in the presence of NAD(+) to give dihydroxyacetone, ammonium ion and NADH, while NADP(+) shows a slight activity. Is also able to produce 2-amino-1-propanol and aspartate by the reductive amination of the corresponding keto alcohol (hydroxyacetone) and keto acid (oxaloacetate) in the presence of ammonium ions and NADH, and that of acetophenone from phenylethylamine by the oxidative deamination in the presence of NAD(+). In Streptomyces virginiae (Streptomyces cinnamonensis), this protein is Amine dehydrogenase.